Consider the following 574-residue polypeptide: Egalitarian protein homolog (574 aa).

Residues 259–278 (LNEDGSENGSDEGEETNNNG) form a disordered region. The span at 262 to 273 (DGSENGSDEGEE) shows a compositional bias: acidic residues. The 3'-5' exonuclease domain maps to 312–414 (NMEKKVVGLD…SLLQHEKFNK (103 aa)).

Component of a dynein-regulating complex composed of at least bicd-1, dlc-1 and egal-1.

It localises to the nucleus envelope. Part of a complex with bicd-1 and dlc-1, which is recruited to the nuclear envelope by unc-83, where in turn, it recruits dynein to the nuclear surface and regulates nuclear migration in hypodermal precursor cells. This chain is Egalitarian protein homolog, found in Caenorhabditis elegans.